The sequence spans 141 residues: ATP synthase epsilon chain (141 aa).

It belongs to the ATPase epsilon chain family. As to quaternary structure, F-type ATPases have 2 components, CF(1) - the catalytic core - and CF(0) - the membrane proton channel. CF(1) has five subunits: alpha(3), beta(3), gamma(1), delta(1), epsilon(1). CF(0) has three main subunits: a, b and c.

It localises to the cell inner membrane. Produces ATP from ADP in the presence of a proton gradient across the membrane. This is ATP synthase epsilon chain from Dechloromonas aromatica (strain RCB).